Consider the following 230-residue polypeptide: Protein FAM3A (230 aa).

An N-terminal signal peptide occupies residues 1 to 33; that stretch reads MRLAGPLRIVVLVVSVGVTWIVVSILLGGPGSG. 2 cysteine pairs are disulfide-bonded: Cys59/Cys87 and Cys65/Cys222. The region spanning 68-226 is the GG-type lectin domain; that stretch reads EHLAFRVVSG…LEMEGCIPRR (159 aa).

The protein belongs to the FAM3 family. In terms of tissue distribution, in similar amounts in testis, pancreas, adrenal, placenta, brain, fetal brain, liver, kidney, skeletal muscle and heart.

The protein resides in the secreted. May act as a defensin against invading fungal microorganisms. This Homo sapiens (Human) protein is Protein FAM3A (FAM3A).